The chain runs to 838 residues: Histidine biosynthesis trifunctional protein (838 aa).

The tract at residues 1–271 (MIFPILPVIS…MVEPRTGYGF (271 aa)) is phosphoribosyl-AMP cyclohydrolase. The phosphoribosyl-ATP pyrophosphohydrolase stretch occupies residues 272 to 360 (CHRETKFTCF…VYFAMVWCIK (89 aa)). Residues 361-838 (HGVRLADIEK…IRMERMAETK (478 aa)) form a histidinol dehydrogenase region. Zn(2+) is bound by residues Gln-660 and His-663. Residues Glu-729 and His-730 contribute to the active site. Positions 764 and 823 each coordinate Zn(2+).

In the C-terminal section; belongs to the histidinol dehydrogenase family. Zn(2+) serves as cofactor.

It carries out the reaction 1-(5-phospho-beta-D-ribosyl)-5'-AMP + H2O = 1-(5-phospho-beta-D-ribosyl)-5-[(5-phospho-beta-D-ribosylamino)methylideneamino]imidazole-4-carboxamide. The enzyme catalyses 1-(5-phospho-beta-D-ribosyl)-ATP + H2O = 1-(5-phospho-beta-D-ribosyl)-5'-AMP + diphosphate + H(+). The catalysed reaction is L-histidinol + 2 NAD(+) + H2O = L-histidine + 2 NADH + 3 H(+). Its pathway is amino-acid biosynthesis; L-histidine biosynthesis; L-histidine from 5-phospho-alpha-D-ribose 1-diphosphate: step 2/9. The protein operates within amino-acid biosynthesis; L-histidine biosynthesis; L-histidine from 5-phospho-alpha-D-ribose 1-diphosphate: step 3/9. It participates in amino-acid biosynthesis; L-histidine biosynthesis; L-histidine from 5-phospho-alpha-D-ribose 1-diphosphate: step 9/9. The sequence is that of Histidine biosynthesis trifunctional protein (HIS4) from Candida albicans (Yeast).